Here is an 831-residue protein sequence, read N- to C-terminus: Translation initiation factor IF-2 (831 aa).

Residues 1–11 show a composition bias toward basic and acidic residues; the sequence is MADEIKKENAP. The disordered stretch occupies residues 1–236; that stretch reads MADEIKKENA…GKHAKKASAL (236 aa). Over residues 22–31 the composition is skewed to low complexity; the sequence is TTVSGTSTTG. Composition is skewed to basic and acidic residues over residues 49–150 and 157–166; these read DLER…RYAD and DNGKLDDYSD. Residues 190–200 show a composition bias toward basic residues; that stretch reads RSKNKVVKAKK. The segment covering 201-225 has biased composition (basic and acidic residues); sequence GGRDDENGNKNERQSDRRNQKDVKG. Positions 330-500 constitute a tr-type G domain; the sequence is HRAPVVTIMG…LLQSEVLELT (171 aa). Residues 339 to 346 are G1; that stretch reads GHVDHGKT. 339 to 346 contacts GTP; the sequence is GHVDHGKT. A G2 region spans residues 364-368; the sequence is GITQH. Residues 386–389 form a G3 region; it reads DTPG. GTP is bound by residues 386–390 and 440–443; these read DTPGH and NKID. Positions 440-443 are G4; that stretch reads NKID. Residues 476–478 are G5; the sequence is SAK.

It belongs to the TRAFAC class translation factor GTPase superfamily. Classic translation factor GTPase family. IF-2 subfamily.

It localises to the cytoplasm. One of the essential components for the initiation of protein synthesis. Protects formylmethionyl-tRNA from spontaneous hydrolysis and promotes its binding to the 30S ribosomal subunits. Also involved in the hydrolysis of GTP during the formation of the 70S ribosomal complex. The protein is Translation initiation factor IF-2 of Histophilus somni (strain 2336) (Haemophilus somnus).